Here is a 634-residue protein sequence, read N- to C-terminus: MSNSNIDNDLDKIDSLLKKAKSKKIPVTYDDINNALPLNKNPSIRQLEEAILKFSDAGVDILESNEDDEIKLDIGMDEEFKLSTNVDNEPEDEVEEENIGTTDDPVRLYLKDMGGVDLLTREHEVEIAKRIEEGHKTMIASLCRSPIAMRCFIVWYEDLVNEKMLLRDLIDLEANMLHDETPENDEENSSETEGEEHEDNHLSMSRVETQILPNIIERMKKIAFICEELLIEAKKCYEKSFEPKVLQNSKKYNNLELLINEVSEIHFNSKRTEEILGKMYGINRDLINKETAFLKLAEKYGVTRQNFLDEYIGSVINAAWKEKMLKNKKVAWKELMTKESDYIDQMIAELSVIESKTGLLVNDFKKLVNTIQKSERQTLQAKKDMIEANLRLVISIAKKYANRGLQFLDLIQEGNIGLMKAVDKFEYRRGYKFSTYATWWIRQAITRAIADQARTIRIPVHMIETINKILRTSRQMLNELGYEPTATEIANRLSMPLDKVRKVMKIAKEPISLENPVGDDSDGGQLGDFIEDKNAVAPIDAAIQSNLREVTTRVLATLTPREERVLRMRFGIGMNTDHTLEEVGQQFKVTRERIRQIESKALRKLQHPIRSKKLNSFRSGGKRGDGNSSDLLEA.

A disordered region spans residues 177–202 (LHDETPENDEENSSETEGEEHEDNHL). The span at 182–197 (PENDEENSSETEGEEH) shows a compositional bias: acidic residues. Residues 385-455 (MIEANLRLVI…TRAIADQART (71 aa)) are sigma-70 factor domain-2. The Interaction with polymerase core subunit RpoC motif lies at 409–412 (DLIQ). The segment at 464-541 (ETINKILRTS…DKNAVAPIDA (78 aa)) is sigma-70 factor domain-3. The tract at residues 554–607 (VLATLTPREERVLRMRFGIGMNTDHTLEEVGQQFKVTRERIRQIESKALRKLQH) is sigma-70 factor domain-4. Residues 580–599 (LEEVGQQFKVTRERIRQIES) constitute a DNA-binding region (H-T-H motif). The interval 608–634 (PIRSKKLNSFRSGGKRGDGNSSDLLEA) is disordered.

It belongs to the sigma-70 factor family. RpoD/SigA subfamily. As to quaternary structure, interacts transiently with the RNA polymerase catalytic core.

The protein resides in the cytoplasm. In terms of biological role, sigma factors are initiation factors that promote the attachment of RNA polymerase to specific initiation sites and are then released. This sigma factor is the primary sigma factor during exponential growth. The polypeptide is RNA polymerase sigma factor RpoD (Rickettsia conorii (strain ATCC VR-613 / Malish 7)).